Consider the following 499-residue polypeptide: Pentatricopeptide repeat-containing protein At5g61800 (499 aa).

PPR repeat units lie at residues 78 to 113, 114 to 150, 151 to 181, 182 to 212, 213 to 247, 248 to 282, 283 to 313, 314 to 348, 349 to 379, and 385 to 419; these read STFC…SVPP, DFHT…GLLS, DLFT…NPQR, DVVT…MPLR, DLVS…GLKP, DNVA…RLFI, DSFL…CSDK, TLFT…GIKP, DGVT…MRSL, and EMKH…GGNR. Residues 424–499 are type E motif; that stretch reads AWSGLLGGCR…KNVGFSKVLS (76 aa).

Belongs to the PPR family. PCMP-E subfamily.

This chain is Pentatricopeptide repeat-containing protein At5g61800 (PCMP-E8), found in Arabidopsis thaliana (Mouse-ear cress).